Here is an 829-residue protein sequence, read N- to C-terminus: Leucine--tRNA ligase (829 aa).

A 'HIGH' region motif is present at residues 40–51; it reads PYPSGAGLHVGH. Residues 609–613 carry the 'KMSKS' region motif; that stretch reads KMSKS. Lysine 612 contributes to the ATP binding site.

The protein belongs to the class-I aminoacyl-tRNA synthetase family.

It localises to the cytoplasm. The enzyme catalyses tRNA(Leu) + L-leucine + ATP = L-leucyl-tRNA(Leu) + AMP + diphosphate. This chain is Leucine--tRNA ligase, found in Lactococcus lactis subsp. lactis (strain IL1403) (Streptococcus lactis).